We begin with the raw amino-acid sequence, 396 residues long: Succinyl-CoA:mesaconate CoA-transferase (396 aa).

Asp-175 (nucleophile) is an active-site residue.

This sequence belongs to the CoA-transferase III family. In terms of assembly, homodimer.

The enzyme catalyses mesaconate + succinyl-CoA = 2-methylfumaryl-CoA + succinate. Its activity is regulated as follows. Shows highest activity at 4 M KCl. Does not require divalent ions for activity. Involved in the methylaspartate cycle. Catalyzes the transfer of the CoA moiety from succinyl-CoA to mesaconate to generate mesaconyl-CoA (2-methylfumaryl-CoA) and succinate. Also shows high activity with methylsuccinate as CoA-acceptor, and only low activity with glutarate, acrylate and itaconate. Cannot use other CoA donors like acetyl-CoA, propionyl-CoA, butyryl-CoA or acetoacetyl-CoA. The polypeptide is Succinyl-CoA:mesaconate CoA-transferase (Haloarcula hispanica (strain ATCC 33960 / DSM 4426 / JCM 8911 / NBRC 102182 / NCIMB 2187 / VKM B-1755)).